We begin with the raw amino-acid sequence, 126 residues long: Glycine cleavage system H protein (126 aa).

Residues 22-104 form the Lipoyl-binding domain; it reads TVTIGITEYA…YEKAWMVKVK (83 aa). At Lys63 the chain carries N6-lipoyllysine.

The protein belongs to the GcvH family. As to quaternary structure, the glycine cleavage system is composed of four proteins: P, T, L and H. It depends on (R)-lipoate as a cofactor.

The glycine cleavage system catalyzes the degradation of glycine. The H protein shuttles the methylamine group of glycine from the P protein to the T protein. Its function is as follows. Is also involved in protein lipoylation via its role as an octanoyl/lipoyl carrier protein intermediate. The chain is Glycine cleavage system H protein from Staphylococcus carnosus (strain TM300).